The chain runs to 185 residues: Capsid protein (185 aa).

Residues 135 to 185 are disordered; that stretch reads PNAPILSTLPETTVVRRRDRGRSPRRRTPSPRRRRSQSPRRRRSQSRESQC. Residues 149–178 show a composition bias toward basic residues; sequence VRRRDRGRSPRRRTPSPRRRRSQSPRRRRS. Residues Ser157, Ser164, and Ser172 each carry the phosphoserine; by host modification. The stretch at 157-163 is one 1; half-length repeat; sequence SPRRRTP. Residues 157-179 are 3 X 8 AA repeats of S-P-R-R-R-[PR]-S-Q; it reads SPRRRTPSPRRRRSQSPRRRRSQ. The short motif at 160–177 is the Bipartite nuclear localization signal element; sequence RRTPSPRRRRSQSPRRRR. 2 tandem repeats follow at residues 164–171 and 172–179. The interval 179-185 is RNA binding; that stretch reads QSRESQC.

Belongs to the orthohepadnavirus core antigen family. As to quaternary structure, homodimerizes, then multimerizes. Interacts with cytosol exposed regions of viral L glycoprotein present in the reticulum-to-Golgi compartment. Interacts with human FLNB. Phosphorylated form interacts with host importin alpha; this interaction depends on the exposure of the NLS, which itself depends upon genome maturation and/or phosphorylation of the capsid protein. Interacts with host NUP153. Post-translationally, phosphorylated by host SRPK1, SRPK2, and maybe protein kinase C or GAPDH. Phosphorylation is critical for pregenomic RNA packaging. Protein kinase C phosphorylation is stimulated by HBx protein and may play a role in transport of the viral genome to the nucleus at the late step during the viral replication cycle.

Its subcellular location is the virion. The protein resides in the host cytoplasm. Its function is as follows. Self assembles to form an icosahedral capsid. Most capsids appear to be large particles with an icosahedral symmetry of T=4 and consist of 240 copies of capsid protein, though a fraction forms smaller T=3 particles consisting of 180 capsid proteins. Entering capsids are transported along microtubules to the nucleus. Phosphorylation of the capsid is thought to induce exposure of nuclear localization signal in the C-terminal portion of the capsid protein that allows binding to the nuclear pore complex via the importin (karyopherin-) alpha and beta. Capsids are imported in intact form through the nuclear pore into the nuclear basket, where it probably binds NUP153. Only capsids that contain the mature viral genome can release the viral DNA and capsid protein into the nucleoplasm. Immature capsids get stuck in the basket. Capsids encapsulate the pre-genomic RNA and the P protein. Pre-genomic RNA is reverse-transcribed into DNA while the capsid is still in the cytoplasm. The capsid can then either be directed to the nucleus, providing more genomes for transcription, or bud through the endoplasmic reticulum to provide new virions. The sequence is that of Capsid protein from Hepatitis B virus genotype A3 (isolate Cameroon/CMR711/1994) (HBV-A).